The primary structure comprises 435 residues: 5-hydroxybenzimidazole synthase (435 aa).

Substrate-binding positions include M95, Y124, H163, 186–188 (SKG), 227–230 (NGLR), and E266. H270 is a binding site for Zn(2+). Y293 is a substrate binding site. Residue H334 participates in Zn(2+) binding. Positions 410, 413, and 417 each coordinate [4Fe-4S] cluster.

The protein belongs to the ThiC family. 5-hydroxybenzimidazole synthase subfamily. As to quaternary structure, homodimer. It depends on [4Fe-4S] cluster as a cofactor.

The catalysed reaction is 5-amino-1-(5-phospho-beta-D-ribosyl)imidazole + AH2 + S-adenosyl-L-methionine = 5-hydroxybenzimidazole + 5'-deoxyadenosine + formate + L-methionine + A + NH4(+) + phosphate + 2 H(+). Catalyzes the conversion of aminoimidazole ribotide (AIR) to 5-hydroxybenzimidazole (5-HBI) in a radical S-adenosyl-L-methionine (SAM)-dependent reaction. Is thus involved in the anaerobic biosynthesis of the benzimidazole lower axial ligand of the cobamide produced by G.sulfurreducens. The protein is 5-hydroxybenzimidazole synthase of Geobacter sulfurreducens (strain ATCC 51573 / DSM 12127 / PCA).